A 358-amino-acid polypeptide reads, in one-letter code: MSVAPLKNDVFLRALLREPVPYTPIWLMRQAGRYLPEYNATRARAGSFMGLAQNPDYACEVTLQPLARYPLDAAILFSDILTVPHAMGLGLDFAPGEGPRFAHPVRDESDVAKLAVPDMDSLRYVFDAVRTIRRELDGRVPLIGFAGSPWTIACYMVEGRGSDDYRLIKSMLYGRPDLLHRILEINAEATRHYLNAQIDAGAQAVMLFDSWGGVLADGLFQQFSLAYTRRVVEGLTREREGRRVPVIVFSKGGGQWLEEIAACGCDAVGLDWTVNLGTARRRVADAVALQGNLDPMTLFGGAQAVRAEARRTLDAFGPVGKGGHVFNLGHGISQYSPPEVVSELVDEVHTYSRALHAG.

Substrate-binding positions include 29–33 (RQAGR), Phe-48, Asp-79, Tyr-155, Ser-210, and His-330.

The protein belongs to the uroporphyrinogen decarboxylase family. Homodimer.

It is found in the cytoplasm. It carries out the reaction uroporphyrinogen III + 4 H(+) = coproporphyrinogen III + 4 CO2. It participates in porphyrin-containing compound metabolism; protoporphyrin-IX biosynthesis; coproporphyrinogen-III from 5-aminolevulinate: step 4/4. Its function is as follows. Catalyzes the decarboxylation of four acetate groups of uroporphyrinogen-III to yield coproporphyrinogen-III. The chain is Uroporphyrinogen decarboxylase from Bordetella parapertussis (strain 12822 / ATCC BAA-587 / NCTC 13253).